The primary structure comprises 176 residues: Membrane glycoprotein UL144 (176 aa).

A signal peptide spans 1-20 (MKPLVMLICFGVILLQLGVT). One copy of the TNFR-Cys repeat lies at 58–95 (PCPNGTYVSGLYNCTDCTQCNVTQVMIRNCTSTNNTVC). 3 disulfide bridges follow: cysteine 59–cysteine 71, cysteine 74–cysteine 87, and cysteine 77–cysteine 95. The chain crosses the membrane as a helical span at residues 134–154 (LAWLSLFIFLVGIILLILYLI).

Interacts with host TRIM23; this interaction causes auto-ubiquitination of TRAF6, leading to NF-kappaB activation.

The protein localises to the membrane. Functionally, activates NF-kappa-B in a tumor necrosis factor receptor (TNFR)-associated factor 6 (TRAF6)-dependent manner, causing the up-regulation of the chemokine CCL22. The sequence is that of Membrane glycoprotein UL144 (UL144) from Human cytomegalovirus (strain Merlin) (HHV-5).